The sequence spans 188 residues: Putative manganese efflux pump MntP (188 aa).

The next 6 membrane-spanning stretches (helical) occupy residues 3–23 (ISAT…ASIG), 41–61 (LIFG…GMLA), 62–82 (SQFI…FLGG), 106–128 (WILV…GLAF), 143–163 (ATLI…PLLG), and 168–188 (ILGG…HFAG).

The protein belongs to the MntP (TC 9.B.29) family.

The protein localises to the cell inner membrane. Probably functions as a manganese efflux pump. This Enterobacter sp. (strain 638) protein is Putative manganese efflux pump MntP.